Consider the following 372-residue polypeptide: Alpha-parvin (372 aa).

The disordered stretch occupies residues 1 to 31 (MATSPQKSPLVPKSPTPKSPPSRKKDDSFLG). Ala2 bears the N-acetylalanine mark. Phosphoserine is present on residues Ser8, Ser14, and Ser19. The segment at 21–25 (PSRKK) is interaction with ARHGAP31. Phosphoserine occurs at positions 28 and 62. 2 consecutive Calponin-homology (CH) domains span residues 95-202 (QELM…QYFR) and 262-369 (NVVK…TKYR). The segment at 223–372 (GILQSRQIQE…NLFTKYRNVE (150 aa)) is required for interaction with TESK1 and ILK.

The protein belongs to the parvin family. Component of the heterotrimeric IPP (ILK-PINCH-PARVIN) complex composed of ILK, LIMS1/PINCH and PARVA; the complex binds to F-actin via the C-terminal tail of LIMS1 and the N-terminal region of PARVA, promoting F-actin filament bundling. Interacts with TGFB1I1. Interacts with ARHGAP31. Interacts with the actin cytoskeleton. Interacts (via C-terminus) with TESK1 (via C-terminus); the interaction inhibits TESK1 kinase activity. Interacts with PXN/PAXILLIN (via LD motif 4).

It localises to the cell junction. Its subcellular location is the focal adhesion. It is found in the cell membrane. The protein localises to the cytoplasm. The protein resides in the cytoskeleton. It localises to the myofibril. Its subcellular location is the sarcomere. It is found in the z line. Functionally, plays a role in sarcomere organization and in smooth muscle cell contraction. Required for normal development of the embryonic cardiovascular system, and for normal septation of the heart outflow tract. Plays a role in sprouting angiogenesis and is required for normal adhesion of vascular smooth muscle cells to endothelial cells during blood vessel development. Plays a role in the reorganization of the actin cytoskeleton, formation of lamellipodia and ciliogenesis. Plays a role in the establishment of cell polarity, cell adhesion, cell spreading, and directed cell migration. Within the IPP (ILK-PINCH-PARVIN) complex, binds to F-actin, promoting F-actin bundling, a process required to generate force for actin cytoskeleton reorganization and subsequent dynamic cell adhesion events such as cell spreading and migration. The sequence is that of Alpha-parvin (Parva) from Mus musculus (Mouse).